Reading from the N-terminus, the 437-residue chain is Enolase (437 aa).

Gln162 provides a ligand contact to (2R)-2-phosphoglycerate. The active-site Proton donor is the Glu204. Residues Asp251, Glu297, and Asp324 each contribute to the Mg(2+) site. Residues Lys349, Arg378, Ser379, and Lys400 each coordinate (2R)-2-phosphoglycerate. Catalysis depends on Lys349, which acts as the Proton acceptor.

Belongs to the enolase family. Requires Mg(2+) as cofactor.

It localises to the cytoplasm. It is found in the secreted. The protein resides in the cell surface. The enzyme catalyses (2R)-2-phosphoglycerate = phosphoenolpyruvate + H2O. Its pathway is carbohydrate degradation; glycolysis; pyruvate from D-glyceraldehyde 3-phosphate: step 4/5. In terms of biological role, catalyzes the reversible conversion of 2-phosphoglycerate (2-PG) into phosphoenolpyruvate (PEP). It is essential for the degradation of carbohydrates via glycolysis. The chain is Enolase from Prosthecochloris aestuarii (strain DSM 271 / SK 413).